An 879-amino-acid polypeptide reads, in one-letter code: Alanine--tRNA ligase (879 aa).

Zn(2+) is bound by residues histidine 565, histidine 569, cysteine 674, and histidine 678.

The protein belongs to the class-II aminoacyl-tRNA synthetase family. Requires Zn(2+) as cofactor.

Its subcellular location is the cytoplasm. The catalysed reaction is tRNA(Ala) + L-alanine + ATP = L-alanyl-tRNA(Ala) + AMP + diphosphate. In terms of biological role, catalyzes the attachment of alanine to tRNA(Ala) in a two-step reaction: alanine is first activated by ATP to form Ala-AMP and then transferred to the acceptor end of tRNA(Ala). Also edits incorrectly charged Ser-tRNA(Ala) and Gly-tRNA(Ala) via its editing domain. The chain is Alanine--tRNA ligase from Gluconobacter oxydans (strain 621H) (Gluconobacter suboxydans).